A 290-amino-acid chain; its full sequence is ATP synthase gamma chain (290 aa).

This sequence belongs to the ATPase gamma chain family. As to quaternary structure, F-type ATPases have 2 components, CF(1) - the catalytic core - and CF(0) - the membrane proton channel. CF(1) has five subunits: alpha(3), beta(3), gamma(1), delta(1), epsilon(1). CF(0) has three main subunits: a, b and c.

It localises to the cell inner membrane. Functionally, produces ATP from ADP in the presence of a proton gradient across the membrane. The gamma chain is believed to be important in regulating ATPase activity and the flow of protons through the CF(0) complex. The chain is ATP synthase gamma chain from Bacteroides fragilis (strain YCH46).